A 199-amino-acid chain; its full sequence is NADH-quinone oxidoreductase subunit B 2 (199 aa).

The [4Fe-4S] cluster site is built by cysteine 78, cysteine 79, cysteine 143, and cysteine 173.

Belongs to the complex I 20 kDa subunit family. NDH-1 is composed of 14 different subunits. Subunits NuoB, C, D, E, F, and G constitute the peripheral sector of the complex. [4Fe-4S] cluster is required as a cofactor.

The protein localises to the cell inner membrane. It catalyses the reaction a quinone + NADH + 5 H(+)(in) = a quinol + NAD(+) + 4 H(+)(out). In terms of biological role, NDH-1 shuttles electrons from NADH, via FMN and iron-sulfur (Fe-S) centers, to quinones in the respiratory chain. The immediate electron acceptor for the enzyme in this species is believed to be ubiquinone. Couples the redox reaction to proton translocation (for every two electrons transferred, four hydrogen ions are translocated across the cytoplasmic membrane), and thus conserves the redox energy in a proton gradient. This Rhodopseudomonas palustris (strain BisB5) protein is NADH-quinone oxidoreductase subunit B 2.